The primary structure comprises 138 residues: uncharacterized protein (138 aa).

The next 3 membrane-spanning stretches (helical) occupy residues 17-37, 43-63, and 117-137; these read IVVS…TIYF, FTVV…LLVC, and FWWM…LVSL.

It localises to the cell membrane. This is an uncharacterized protein from Mycoplasma genitalium (strain ATCC 33530 / DSM 19775 / NCTC 10195 / G37) (Mycoplasmoides genitalium).